An 809-amino-acid chain; its full sequence is Ubiquitin carboxyl-terminal hydrolase 1 (809 aa).

Residues 101-738 (AGLVNDGNTC…GVFMLFYEYD (638 aa)) form the USP domain. Catalysis depends on Cys110, which acts as the Nucleophile. The interval 143–195 (NEHNEEGNGQESAQDEATHKKNTRKGGKVYGKHKKKLNRKSSSKEDEEKSQEP) is disordered. The span at 162–183 (KKNTRKGGKVYGKHKKKLNRKS) shows a compositional bias: basic residues. The span at 184-194 (SSKEDEEKSQE) shows a compositional bias: basic and acidic residues. A phosphoserine mark is found at Ser530, Ser531, and Ser555. Residues 569-596 (ASHYNHTKDISNYDPLNGEVDGVTSDDE) are disordered. A phosphoserine mark is found at Ser618 and Ser638. Residue Thr652 is modified to Phosphothreonine. Residues Ser653, Ser654, and Ser670 each carry the phosphoserine modification. His697 serves as the catalytic Proton acceptor. A disordered region spans residues 750-809 (LEAIQSNNEEDDEKEQEQKGVQEPKESQEQGEGEEQEEGQEQMKFERTEDHRDISGKDVN). At Ser755 the chain carries Phosphoserine. Positions 765–777 (QEQKGVQEPKESQ) are enriched in basic and acidic residues. Residues 778–789 (EQGEGEEQEEGQ) are compositionally biased toward acidic residues. The span at 790 to 809 (EQMKFERTEDHRDISGKDVN) shows a compositional bias: basic and acidic residues.

The protein belongs to the peptidase C19 family.

The catalysed reaction is Thiol-dependent hydrolysis of ester, thioester, amide, peptide and isopeptide bonds formed by the C-terminal Gly of ubiquitin (a 76-residue protein attached to proteins as an intracellular targeting signal).. Its function is as follows. Has an ATP-independent isopeptidase activity, cleaving at the C-terminus of the ubiquitin moiety in natural or engineered linear fusion proteins, irrespective of their size or the presence of an N-terminal extension to ubiquitin. In Saccharomyces cerevisiae (strain ATCC 204508 / S288c) (Baker's yeast), this protein is Ubiquitin carboxyl-terminal hydrolase 1 (UBP1).